Reading from the N-terminus, the 762-residue chain is Pyrophosphate-energized vacuolar membrane proton pump (762 aa).

Residues 1–6 (MAILGE) are Intravacuolar-facing. Residues 7 to 33 (LGTEILIPVCGVIGIVFAVAQWFIVSK) traverse the membrane as a helical segment. The Cytoplasmic segment spans residues 34–81 (VKVTPGAASAAAGAKNGYGDYLIEEEEGLNDHNVVVKCAEIQTAISEG). A helical membrane pass occupies residues 82-111 (ATSFLFTMYQYVGMFMVVFAAIIFLFLGSI). The Intravacuolar segment spans residues 112 to 131 (EGFSTKGQPCTYSKGTCKPA). Residues cysteine 121 and cysteine 128 are joined by a disulfide bond. The chain crosses the membrane as a helical span at residues 132-159 (LYTALFSTASFLLGAITSLVSGFLGMKI). Topologically, residues 160 to 182 (ATYANARTTLEARKGVGKAFITA) are cytoplasmic. The helical transmembrane segment at 183-212 (FRSGAVMGFLLSSSGLVVLYITINVFKMYY) threads the bilayer. At 213-215 (GDD) the chain is on the intravacuolar side. A helical membrane pass occupies residues 216 to 244 (WEGLFESITGYGLGGSSMALFGRVGGGIY). The Cytoplasmic portion of the chain corresponds to 245–282 (TKAADVGADLVGKVERNIPEDDPRNPAVIADNVGDNVG). Lysine 246 serves as a coordination point for substrate. Mg(2+) contacts are provided by aspartate 249, aspartate 253, and aspartate 279. Residues 283–308 (DIAGMGSDLFGSYAESSCAALVVASI) form a helical membrane-spanning segment. The Intravacuolar portion of the chain corresponds to 309-316 (SSFGINHD). The chain crosses the membrane as a helical span at residues 317–342 (FTAMCYPLLVSSVGIIVCLLTTLFAT). Residues 343 to 350 (DFFEIKAA) lie on the Cytoplasmic side of the membrane. Residues 351 to 378 (NEIEPALKKQLIISTALMTVGVAVISWL) form a helical membrane-spanning segment. The Intravacuolar segment spans residues 379-397 (ALPAKFTIFNFGAQKEVSN). A helical transmembrane segment spans residues 398–421 (WGLFFCVAVGLWAGLIIGFVTEYY). Residues 422-443 (TSNAYSPVQDVADSCRTGAATN) are Cytoplasmic-facing. Residues 444–468 (VIFGLALGYKSVIIPIFAIAVSIYV) form a helical membrane-spanning segment. Residues 469–474 (SFSIAA) are Intravacuolar-facing. The helical transmembrane segment at 475-501 (MYGIAMAALGMLSTMATGLAIDAYGPI) threads the bilayer. Over 502 to 530 (SDNAGGIAEMAGMSHRIRERTDALDAAGN) the chain is Cytoplasmic. Residues aspartate 503 and asparagine 530 each coordinate Mg(2+). Residues 531-559 (TTAAIGKGFAIGSAALVSLALFGAFVSRA) form a helical membrane-spanning segment. At 560-569 (GVKVVDVLSP) the chain is on the intravacuolar side. A helical membrane pass occupies residues 570 to 598 (KVFIGLIVGAMLPYWFSAMTMKSVGSAAL). Over 599–627 (KMVEEVRRQFNTIPGLMEGTAKPDYATCV) the chain is Cytoplasmic. Residues 628–656 (KISTDASIKEMIPPGALVMLTPLIVGTLF) form a helical membrane-spanning segment. Position 657 (glycine 657) is a topological domain, intravacuolar. The helical transmembrane segment at 658-685 (VETLSGVLAGALVSGVQIAISASNTGGA) threads the bilayer. Over 686-728 (WDNAKKYIEAGNSEHARSLGPKGSDCHKAAVIGDTIGDPLKDT) the chain is Cytoplasmic. Mg(2+)-binding residues include aspartate 687 and aspartate 723. Lysine 726 is a substrate binding site. Residues 729–754 (SGPSLNILIKLMAVESLVFAPFFATY) traverse the membrane as a helical segment. The Intravacuolar segment spans residues 755-762 (GGLLFKYI).

It belongs to the H(+)-translocating pyrophosphatase (TC 3.A.10) family. K(+)-stimulated subfamily. Monomer.

The protein resides in the vacuole membrane. It carries out the reaction diphosphate + H2O + H(+)(in) = 2 phosphate + 2 H(+)(out). Its function is as follows. Contributes to the transtonoplast (from cytosol to vacuole lumen) H(+)-electrochemical potential difference. It establishes a proton gradient of similar and often greater magnitude than the H(+)-ATPase on the same membrane. This Hordeum vulgare (Barley) protein is Pyrophosphate-energized vacuolar membrane proton pump.